A 466-amino-acid polypeptide reads, in one-letter code: Probable sensor protein PcoS (466 aa).

Residues 1–10 (MRFKISLTTR) lie on the Cytoplasmic side of the membrane. A helical transmembrane segment spans residues 11–31 (LSLIFSAVMLTVWWLSSFILI). Residues 32 to 171 (STLNDYFDNQ…HTLLMDKLST (140 aa)) lie on the Periplasmic side of the membrane. Residues 172–192 (WLFWFNIGLVFISVFLGWLTT) traverse the membrane as a helical segment. The region spanning 193-246 (RIGLKPLREMTSLASSMTVHSLDQRLNPDLAPPEISETMQEFNNMFDRLEGAFR) is the HAMP domain. The Cytoplasmic segment spans residues 193-466 (RIGLKPLREM…IVFKVRLLMD (274 aa)). In terms of domain architecture, Histidine kinase spans 254–466 (DIAHELRTPV…IVFKVRLLMD (213 aa)). Position 257 is a phosphohistidine; by autocatalysis (histidine 257).

The protein localises to the cell inner membrane. The enzyme catalyses ATP + protein L-histidine = ADP + protein N-phospho-L-histidine.. In terms of biological role, probable member of a two-component regulatory system PcoS/PcoR. May activate PcoR by phosphorylation. This is Probable sensor protein PcoS (pcoS) from Escherichia coli.